The chain runs to 594 residues: NADH-quinone oxidoreductase subunit C/D (594 aa).

The interval 1–185 (MTTGSALYIP…DPFSLNLAKQ (185 aa)) is NADH dehydrogenase I subunit C. The segment at 209-594 (DYMFLNLGPN…IDFVMADVDR (386 aa)) is NADH dehydrogenase I subunit D.

The protein in the N-terminal section; belongs to the complex I 30 kDa subunit family. In the C-terminal section; belongs to the complex I 49 kDa subunit family. In terms of assembly, NDH-1 is composed of 13 different subunits. Subunits NuoB, CD, E, F, and G constitute the peripheral sector of the complex.

It localises to the cell inner membrane. It carries out the reaction a quinone + NADH + 5 H(+)(in) = a quinol + NAD(+) + 4 H(+)(out). Its function is as follows. NDH-1 shuttles electrons from NADH, via FMN and iron-sulfur (Fe-S) centers, to quinones in the respiratory chain. The immediate electron acceptor for the enzyme in this species is believed to be ubiquinone. Couples the redox reaction to proton translocation (for every two electrons transferred, four hydrogen ions are translocated across the cytoplasmic membrane), and thus conserves the redox energy in a proton gradient. The polypeptide is NADH-quinone oxidoreductase subunit C/D (Pseudomonas fluorescens (strain SBW25)).